Reading from the N-terminus, the 149-residue chain is Large ribosomal subunit protein uL11 (149 aa).

It belongs to the universal ribosomal protein uL11 family. As to quaternary structure, part of the ribosomal stalk of the 50S ribosomal subunit. Interacts with L10 and the large rRNA to form the base of the stalk. L10 forms an elongated spine to which L12 dimers bind in a sequential fashion forming a multimeric L10(L12)X complex. In terms of processing, one or more lysine residues are methylated.

Functionally, forms part of the ribosomal stalk which helps the ribosome interact with GTP-bound translation factors. In Methylobacterium sp. (strain 4-46), this protein is Large ribosomal subunit protein uL11.